We begin with the raw amino-acid sequence, 317 residues long: Protease 7 (317 aa).

The signal sequence occupies residues 1-20 (MRAKLLGIVLTTPIAISSFA). At 21–31 (STETLSFTPDN) the chain is on the periplasmic side. A beta stranded transmembrane segment spans residues 32–41 (INADISLGTL). Over 42-69 (SGKTKERVYLAEEGGRKVSQLDWKFNNA) the chain is Extracellular. The chain crosses the membrane as a beta stranded span at residues 70–78 (AIIKGAINW). At 79–83 (DLMPQ) the chain is on the periplasmic side. Residues 84 to 92 (ISIGAAGWT) form a beta stranded membrane-spanning segment. The Extracellular portion of the chain corresponds to 93–130 (TLGSRGGNMVDQDWMDSSNPGTWTDESRHPDTQLNYAN). Residues D103 and D105 contribute to the active site. The beta stranded transmembrane segment at 131–140 (EFDLNIKGWL) threads the bilayer. At 141-145 (LNEPN) the chain is on the periplasmic side. A beta stranded membrane pass occupies residues 146 to 156 (YRLGLMAGYQE). Topologically, residues 157–197 (SRYSFTARGGSYIYSSEEGFRDDIGSFPNGERAIGYKQRFK) are extracellular. Residues 198–209 (MPYIGLTGSYRY) traverse the membrane as a beta stranded segment. Over 210–211 (ED) the chain is Periplasmic. A beta stranded transmembrane segment spans residues 212-221 (FELGGTFKYS). Topologically, residues 222–250 (GWVESSDNDEHYDPGKRITYRSKVKDQNY) are extracellular. Residues D230 and H232 contribute to the active site. The beta stranded transmembrane segment at 251-261 (YSVAVNAGYYV) threads the bilayer. Over 262–264 (TPN) the chain is Periplasmic. The beta stranded transmembrane segment at 265-274 (AKVYVEGAWN) threads the bilayer. Residues 275 to 306 (RVTNKKGNTSLYDHNNNTSDYSKNGAGIENYN) are Extracellular-facing. Residues 307–316 (FITTAGLKYT) traverse the membrane as a beta stranded segment. A topological domain (periplasmic) is located at residue F317.

Belongs to the peptidase A26 family. In terms of assembly, homopentamer.

The protein localises to the cell outer membrane. It catalyses the reaction Has a virtual requirement for Arg in the P1 position and a slightly less stringent preference for this residue in the P1' position, which can also contain Lys, Gly or Val.. Inhibited by zinc. In terms of biological role, protease that can cleave T7 RNA polymerase, ferric enterobactin receptor protein (FEP), antimicrobial peptide protamine and other proteins. This protease has a specificity for paired basic residues. The polypeptide is Protease 7 (ompT) (Escherichia coli (strain K12)).